The following is a 729-amino-acid chain: DNA topoisomerase 3 (729 aa).

Residues 3 to 136 (KSVVIAEKPS…IKRLWISSVT (134 aa)) form the Toprim domain. Residues Glu-9 and Asp-105 each contribute to the Mg(2+) site. The 442-residue stretch at 153 to 594 (YDNLYASAVA…EMKNYTKEIV (442 aa)) folds into the Topo IA-type catalytic domain. The tract at residues 187–192 (NCGRVQ) is interaction with DNA. The O-(5'-phospho-DNA)-tyrosine intermediate role is filled by Tyr-310. A compositionally biased stretch (basic and acidic residues) spans 686–713 (ERRKKESGNKADKRDVQKYMKQQKKEEE). The interval 686-718 (ERRKKESGNKADKRDVQKYMKQQKKEEEPLNNP) is disordered.

It belongs to the type IA topoisomerase family. Mg(2+) serves as cofactor.

It carries out the reaction ATP-independent breakage of single-stranded DNA, followed by passage and rejoining.. In terms of biological role, releases the supercoiling and torsional tension of DNA, which is introduced during the DNA replication and transcription, by transiently cleaving and rejoining one strand of the DNA duplex. Introduces a single-strand break via transesterification at a target site in duplex DNA. The scissile phosphodiester is attacked by the catalytic tyrosine of the enzyme, resulting in the formation of a DNA-(5'-phosphotyrosyl)-enzyme intermediate and the expulsion of a 3'-OH DNA strand. The free DNA strand then undergoes passage around the unbroken strand, thus removing DNA supercoils. Finally, in the religation step, the DNA 3'-OH attacks the covalent intermediate to expel the active-site tyrosine and restore the DNA phosphodiester backbone. This chain is DNA topoisomerase 3, found in Bacillus cereus (strain ZK / E33L).